The primary structure comprises 943 residues: Isoleucine--tRNA ligase (943 aa).

The 'HIGH' region motif lies at 58-68 (PYANGTIHIGH). Residue glutamate 567 coordinates L-isoleucyl-5'-AMP. Residues 608–612 (KMSKS) carry the 'KMSKS' region motif. Lysine 611 serves as a coordination point for ATP. 4 residues coordinate Zn(2+): cysteine 906, cysteine 909, cysteine 926, and cysteine 929.

The protein belongs to the class-I aminoacyl-tRNA synthetase family. IleS type 1 subfamily. Monomer. Zn(2+) is required as a cofactor.

It is found in the cytoplasm. The enzyme catalyses tRNA(Ile) + L-isoleucine + ATP = L-isoleucyl-tRNA(Ile) + AMP + diphosphate. In terms of biological role, catalyzes the attachment of isoleucine to tRNA(Ile). As IleRS can inadvertently accommodate and process structurally similar amino acids such as valine, to avoid such errors it has two additional distinct tRNA(Ile)-dependent editing activities. One activity is designated as 'pretransfer' editing and involves the hydrolysis of activated Val-AMP. The other activity is designated 'posttransfer' editing and involves deacylation of mischarged Val-tRNA(Ile). The sequence is that of Isoleucine--tRNA ligase from Pseudomonas fluorescens (strain SBW25).